A 220-amino-acid chain; its full sequence is Glycerol-3-phosphate acyltransferase (220 aa).

5 helical membrane passes run 4–24 (LTIL…AVLV), 53–73 (VAAL…VYLA), 80–100 (PVYL…PIFF), 116–136 (MPIG…VLLV), and 138–158 (GYSS…TYLI). The disordered stretch occupies residues 193–220 (WGRQAQRRQEEVGEMDDVAQKRDERDKK). The segment covering 210-220 (VAQKRDERDKK) has biased composition (basic and acidic residues).

This sequence belongs to the PlsY family. As to quaternary structure, probably interacts with PlsX.

It is found in the cell inner membrane. The enzyme catalyses an acyl phosphate + sn-glycerol 3-phosphate = a 1-acyl-sn-glycero-3-phosphate + phosphate. The protein operates within lipid metabolism; phospholipid metabolism. Catalyzes the transfer of an acyl group from acyl-phosphate (acyl-PO(4)) to glycerol-3-phosphate (G3P) to form lysophosphatidic acid (LPA). This enzyme utilizes acyl-phosphate as fatty acyl donor, but not acyl-CoA or acyl-ACP. This chain is Glycerol-3-phosphate acyltransferase, found in Aeromonas salmonicida (strain A449).